The primary structure comprises 397 residues: Ethanolaminephosphotransferase 1 (397 aa).

A2 is subject to N-acetylalanine. 10 helical membrane-spanning segments follow: residues 47–69 (WLAP…LLMA), 84–103 (HVPD…AYTL), 123–145 (LFDH…SIFG), 150–172 (GVSV…LSHW), 179–201 (ILFL…IVTA), 221–243 (LFTA…LNFF), 256–278 (VYEA…AWIL), 291–310 (VFYF…LIVC), 317–339 (CPTL…LGVA), and 344–366 (SILL…VRVV). Position 387 (U387) is a non-standard amino acid, selenocysteine.

Belongs to the CDP-alcohol phosphatidyltransferase class-I family. Mg(2+) is required as a cofactor. It depends on Mn(2+) as a cofactor.

The protein localises to the endoplasmic reticulum membrane. It catalyses the reaction CDP-ethanolamine + a 1,2-diacyl-sn-glycerol = a 1,2-diacyl-sn-glycero-3-phosphoethanolamine + CMP + H(+). It carries out the reaction 1-O-alkyl-2-acyl-sn-glycerol + CDP-ethanolamine = a 1-O-alkyl-2-acyl-sn-glycero-3-phosphoethanolamine + CMP + H(+). Its pathway is phospholipid metabolism; phosphatidylethanolamine biosynthesis; phosphatidylethanolamine from ethanolamine: step 3/3. Functionally, ethanolaminephosphotransferase that catalyzes the transfer of phosphoethanolamine (PE) from CDP-ethanolamine to lipid acceptors, the final step in the synthesis of PE via the 'Kennedy' pathway. PE is the second most abundant phospholipid of membranes in mammals and is involved in various membrane-related cellular processes. The enzyme is critical for the synthesis of several PE species and also catalyzes the synthesis of plasmanyl-PE, a lipid required for proper myelination and neurodevelopment, from 1-alkyl-2-acylglycerol. This is Ethanolaminephosphotransferase 1 from Pongo abelii (Sumatran orangutan).